The sequence spans 98 residues: Acylphosphatase (98 aa).

In terms of domain architecture, Acylphosphatase-like spans 10-96; sequence ARLLRIRGRV…TDGAGFDCLP (87 aa). Residues Arg-25 and Asn-43 contribute to the active site.

It belongs to the acylphosphatase family.

It carries out the reaction an acyl phosphate + H2O = a carboxylate + phosphate + H(+). This chain is Acylphosphatase (acyP), found in Azoarcus sp. (strain BH72).